We begin with the raw amino-acid sequence, 316 residues long: Aspartate carbamoyltransferase catalytic subunit (316 aa).

The carbamoyl phosphate site is built by R56 and T57. K84 provides a ligand contact to L-aspartate. The carbamoyl phosphate site is built by R106, H139, and Q142. L-aspartate-binding residues include R172 and R226. Carbamoyl phosphate is bound by residues G267 and P268.

The protein belongs to the aspartate/ornithine carbamoyltransferase superfamily. ATCase family. As to quaternary structure, heterododecamer (2C3:3R2) of six catalytic PyrB chains organized as two trimers (C3), and six regulatory PyrI chains organized as three dimers (R2).

It catalyses the reaction carbamoyl phosphate + L-aspartate = N-carbamoyl-L-aspartate + phosphate + H(+). The protein operates within pyrimidine metabolism; UMP biosynthesis via de novo pathway; (S)-dihydroorotate from bicarbonate: step 2/3. Catalyzes the condensation of carbamoyl phosphate and aspartate to form carbamoyl aspartate and inorganic phosphate, the committed step in the de novo pyrimidine nucleotide biosynthesis pathway. The chain is Aspartate carbamoyltransferase catalytic subunit from Mycobacterium sp. (strain JLS).